The following is a 127-amino-acid chain: MAKLSQDDLLAQFEEMTLIELSEFVKAFEEKFDVTAAAAVAVAGPAGVGAAPEAAEEQDEFDVILTGAGDKKIQVIKVVRELTSLGLKEAKDLVDGAPKPVLEKVAKEAADKAAESLKAAGAAVEVK.

The protein belongs to the bacterial ribosomal protein bL12 family. As to quaternary structure, homodimer. Part of the ribosomal stalk of the 50S ribosomal subunit. Forms a multimeric L10(L12)X complex, where L10 forms an elongated spine to which 2 to 4 L12 dimers bind in a sequential fashion. Binds GTP-bound translation factors.

Functionally, forms part of the ribosomal stalk which helps the ribosome interact with GTP-bound translation factors. Is thus essential for accurate translation. This chain is Large ribosomal subunit protein bL12, found in Streptomyces virginiae (Streptomyces cinnamonensis).